Consider the following 142-residue polypeptide: Large ribosomal subunit protein uL13 (142 aa).

Belongs to the universal ribosomal protein uL13 family. As to quaternary structure, part of the 50S ribosomal subunit.

This protein is one of the early assembly proteins of the 50S ribosomal subunit, although it is not seen to bind rRNA by itself. It is important during the early stages of 50S assembly. The polypeptide is Large ribosomal subunit protein uL13 (Buchnera aphidicola subsp. Cinara cedri (strain Cc)).